The sequence spans 92 residues: Probable Fe(2+)-trafficking protein (92 aa).

The protein belongs to the Fe(2+)-trafficking protein family.

In terms of biological role, could be a mediator in iron transactions between iron acquisition and iron-requiring processes, such as synthesis and/or repair of Fe-S clusters in biosynthetic enzymes. The sequence is that of Probable Fe(2+)-trafficking protein from Xanthomonas campestris pv. campestris (strain 8004).